The following is a 907-amino-acid chain: Probable disease resistance protein At1g58390 (907 aa).

The NB-ARC domain maps to 144-456; the sequence is QGDRQREMRQ…AEGISTAEDY (313 aa). 190 to 197 is a binding site for ATP; it reads GMGGLGKT. LRR repeat units lie at residues 608-631 and 843-868; these read LIHL…LGNL and MPLL…RFIY.

It belongs to the disease resistance NB-LRR family.

Possible disease resistance protein. This chain is Probable disease resistance protein At1g58390, found in Arabidopsis thaliana (Mouse-ear cress).